The primary structure comprises 122 residues: Small ribosomal subunit protein uS13 (122 aa).

The disordered stretch occupies residues 99-122 (RGQRTHTNARTRKGPAKAIAGKKK).

This sequence belongs to the universal ribosomal protein uS13 family. In terms of assembly, part of the 30S ribosomal subunit. Forms a loose heterodimer with protein S19. Forms two bridges to the 50S subunit in the 70S ribosome.

Functionally, located at the top of the head of the 30S subunit, it contacts several helices of the 16S rRNA. In the 70S ribosome it contacts the 23S rRNA (bridge B1a) and protein L5 of the 50S subunit (bridge B1b), connecting the 2 subunits; these bridges are implicated in subunit movement. Contacts the tRNAs in the A and P-sites. This is Small ribosomal subunit protein uS13 from Bradyrhizobium diazoefficiens (strain JCM 10833 / BCRC 13528 / IAM 13628 / NBRC 14792 / USDA 110).